A 221-amino-acid polypeptide reads, in one-letter code: uncharacterized protein (221 aa).

The protein to E.coli YheO.

This is an uncharacterized protein from Haemophilus influenzae (strain ATCC 51907 / DSM 11121 / KW20 / Rd).